We begin with the raw amino-acid sequence, 515 residues long: Methionine--tRNA ligase (515 aa).

Positions 13–23 (AYPNGKPHIGH) match the 'HIGH' region motif. Residues 300–304 (KMSKS) carry the 'KMSKS' region motif. Residue lysine 303 participates in ATP binding.

The protein belongs to the class-I aminoacyl-tRNA synthetase family. MetG type 2B subfamily. As to quaternary structure, monomer.

It localises to the cytoplasm. The catalysed reaction is tRNA(Met) + L-methionine + ATP = L-methionyl-tRNA(Met) + AMP + diphosphate. Is required not only for elongation of protein synthesis but also for the initiation of all mRNA translation through initiator tRNA(fMet) aminoacylation. This chain is Methionine--tRNA ligase, found in Brucella melitensis biotype 1 (strain ATCC 23456 / CCUG 17765 / NCTC 10094 / 16M).